The sequence spans 170 residues: F107 fimbrial protein (170 aa).

Positions 1-21 (MKRLVFISFVALSMTAGSAMA) are cleaved as a signal peptide. C37 and C78 are disulfide-bonded.

This sequence belongs to the fimbrial protein family.

Its subcellular location is the fimbrium. In terms of biological role, fimbriae (also called pili), polar filaments radiating from the surface of the bacterium to a length of 0.5-1.5 micrometers and numbering 100-300 per cell, enable bacteria to colonize the epithelium of specific host organs. The protein is F107 fimbrial protein (fedA) of Escherichia coli.